Reading from the N-terminus, the 516-residue chain is L-amino-acid oxidase (516 aa).

The N-terminal stretch at 1–18 (MNVFFMFSLLFLAALGSC) is a signal peptide. Cys-28 and Cys-189 are oxidised to a cystine. FAD is bound by residues 61–62 (MS), 81–82 (EA), Arg-89, and 103–106 (GPMR). Substrate-binding residues include Arg-106 and His-239. Position 279 (Val-279) interacts with FAD. Cys-349 and Cys-430 are disulfide-bonded. An N-linked (GlcNAc...) asparagine glycan is attached at Asn-379. Substrate is bound at residue Tyr-390. Residues Glu-475 and 482–487 (GWIDST) each bind FAD. Residue 482–483 (GW) participates in substrate binding.

It belongs to the flavin monoamine oxidase family. FIG1 subfamily. Homodimer; non-covalently linked. It depends on FAD as a cofactor. N-glycosylated. In terms of tissue distribution, expressed by the venom gland.

It localises to the secreted. It carries out the reaction an L-alpha-amino acid + O2 + H2O = a 2-oxocarboxylate + H2O2 + NH4(+). Catalyzes an oxidative deamination of predominantly hydrophobic and aromatic L-amino acids, thus producing hydrogen peroxide that may contribute to the diverse toxic effects of this enzyme. Exhibits diverse biological activities, such as hemorrhage, hemolysis, edema, apoptosis of vascular endothelial cells or tumor cell lines, antibacterial and antiparasitic activities, as well as regulation of platelet aggregation. Effects of snake L-amino oxidases on platelets are controversial, since they either induce aggregation or inhibit agonist-induced aggregation. These different effects are probably due to different experimental conditions. This Sistrurus catenatus edwardsii (Desert massasauga) protein is L-amino-acid oxidase.